We begin with the raw amino-acid sequence, 132 residues long: Ribosome-binding factor A (132 aa).

The protein belongs to the RbfA family. Monomer. Binds 30S ribosomal subunits, but not 50S ribosomal subunits or 70S ribosomes.

It localises to the cytoplasm. Its function is as follows. One of several proteins that assist in the late maturation steps of the functional core of the 30S ribosomal subunit. Associates with free 30S ribosomal subunits (but not with 30S subunits that are part of 70S ribosomes or polysomes). Required for efficient processing of 16S rRNA. May interact with the 5'-terminal helix region of 16S rRNA. The protein is Ribosome-binding factor A of Pectobacterium atrosepticum (strain SCRI 1043 / ATCC BAA-672) (Erwinia carotovora subsp. atroseptica).